The sequence spans 503 residues: Cytochrome c lysine N-methyltransferase 1 (503 aa).

The SET domain occupies 52 to 276 (SKFELLRIPR…EEAQVFISYA (225 aa)). The segment at 190 to 291 (NYEKLISTVY…VHFEQIYGFL (102 aa)) is SET-like.

This sequence belongs to the class V-like SAM-binding methyltransferase superfamily.

It localises to the cytoplasm. Its subcellular location is the cytosol. It catalyses the reaction L-lysyl-[cytochrome c] + S-adenosyl-L-methionine = N(6)-methyl-L-lysyl-[cytochrome c] + S-adenosyl-L-homocysteine + H(+). Functionally, methyltransferase which mediates trimethylation of cytochrome c (CYC1). The protein is Cytochrome c lysine N-methyltransferase 1 (CTM1) of Kluyveromyces lactis (strain ATCC 8585 / CBS 2359 / DSM 70799 / NBRC 1267 / NRRL Y-1140 / WM37) (Yeast).